The primary structure comprises 317 residues: Ribonuclease Z (317 aa).

Zn(2+) contacts are provided by His-62, His-64, Asp-66, His-67, His-139, Asp-210, and His-268. Asp-66 functions as the Proton acceptor in the catalytic mechanism.

It belongs to the RNase Z family. Homodimer. Zn(2+) serves as cofactor.

It catalyses the reaction Endonucleolytic cleavage of RNA, removing extra 3' nucleotides from tRNA precursor, generating 3' termini of tRNAs. A 3'-hydroxy group is left at the tRNA terminus and a 5'-phosphoryl group is left at the trailer molecule.. In terms of biological role, zinc phosphodiesterase, which displays some tRNA 3'-processing endonuclease activity. Probably involved in tRNA maturation, by removing a 3'-trailer from precursor tRNA. This is Ribonuclease Z from Picosynechococcus sp. (strain ATCC 27264 / PCC 7002 / PR-6) (Agmenellum quadruplicatum).